Reading from the N-terminus, the 716-residue chain is Translation initiation factor IF-2 (716 aa).

Residues 50 to 137 (FKKSAKPAGN…KPKKELPEKI (88 aa)) are disordered. Low complexity predominate over residues 92-101 (NNVQNTQFNN). Residues 102–118 (KNKKKNNNNKKNKRGKN) are compositionally biased toward basic residues. Over residues 125–137 (KQFKPKKELPEKI) the composition is skewed to basic and acidic residues. Residues 217–386 (IRPPVVTIMG…LLVSEVEELK (170 aa)) enclose the tr-type G domain. A G1 region spans residues 226 to 233 (GHVDHGKT). 226–233 (GHVDHGKT) lines the GTP pocket. The interval 251–255 (GITQH) is G2. A G3 region spans residues 272–275 (DTPG). Residues 272-276 (DTPGH) and 326-329 (NKID) contribute to the GTP site. Residues 326 to 329 (NKID) form a G4 region. The segment at 362-364 (SAL) is G5.

Belongs to the TRAFAC class translation factor GTPase superfamily. Classic translation factor GTPase family. IF-2 subfamily.

Its subcellular location is the cytoplasm. Functionally, one of the essential components for the initiation of protein synthesis. Protects formylmethionyl-tRNA from spontaneous hydrolysis and promotes its binding to the 30S ribosomal subunits. Also involved in the hydrolysis of GTP during the formation of the 70S ribosomal complex. The polypeptide is Translation initiation factor IF-2 (Bacillus licheniformis (strain ATCC 14580 / DSM 13 / JCM 2505 / CCUG 7422 / NBRC 12200 / NCIMB 9375 / NCTC 10341 / NRRL NRS-1264 / Gibson 46)).